The chain runs to 349 residues: Kelch domain-containing protein 9 (349 aa).

Kelch repeat units follow at residues 39–89, 91–137, and 325–349; these read RFYL…PVDG, WLCV…SHTC, and QLYL…LDFI.

As to quaternary structure, interacts with CCNA1.

The sequence is that of Kelch domain-containing protein 9 (KLHDC9) from Homo sapiens (Human).